A 379-amino-acid polypeptide reads, in one-letter code: Programmed cell death protein 2-like (379 aa).

In Gallus gallus (Chicken), this protein is Programmed cell death protein 2-like (PDCD2L).